Consider the following 898-residue polypeptide: MNTKMNERWRTPMKLKYLSCTILAPLAIGVFSATAADNNSAIYFNTSQPINDLQGSLAAEVKFAQSQILPAHPKEGDSQPHLTSLRKSLLLVRPVKADDKTPVQVEARDDNNKILGTLTLYPPSSLPDTIYHLDGVPEGGIDFTPHNGTKKIINTVAEVNKLSDASGSSIHSHLTNNALVEIHTANGRWVRDIYLPQGPDLEGKMVRFVSSAGYSSTVFYGDRKVTLSVGNTLLFKYVNGQWFRSGELENNRITYAQHIWSAELPAHWIVPGLNLVIKQGNLSGRLNDIKIGAPGELLLHTIDIGMLTTPRDRFDFAKDKEAHREYFQTIPVSRMIVNNYAPLHLKEVMLPTGELLTDMDPGNGGWHSGTMRQRIGKELVSHGIDNANYGLNSTAGLGENSHPYVVAQLAAHNSRGNYANGIQVHGGSGGGGIVTLDSTLGNEFSHEVGHNYGLGHYVDGFKGSVHRSAENNNSTWGWDGDKKRFIPNFYPSQTNEKSCLNNQCQEPFDGHKFGFDAMAGGSPFSAANRFTMYTPNSSAIIQRFFENKAVFDSRSSTGFSKWNADTQEMEPYEHTIDRAEQITASVNELSESKMAELMAEYAVVKVHMWNGNWTRNIYIPTASADNRGSILTINHEAGYNSYLFINGDEKVVSQGYKKSFVSDGQFWKERDVVDTREARKPEQFGVPVTTLVGYYDPEGTLSSYIYPAMYGAYGFTYSDDSQNLSDNDCQLQVDTKEGQLRFRLANHRANNTVMNKFHINVPTESQPTQATLVCNNKILDTKSLTPAPEGLTYTVNGQALPAKENEGCIVSVNSGKRYCLPVGQRSGYSLPDWIVGQEVYVDSGAKAKVLLSDWDNLSYNRIGEFVGNVNPADMKKVKAWNGQYLDFSKPRSMRVVYK.

The N-terminal stretch at 1 to 35 (MNTKMNERWRTPMKLKYLSCTILAPLAIGVFSATA) is a signal peptide. The 256-residue stretch at 296-551 (ELLLHTIDIG…QRFFENKAVF (256 aa)) folds into the Peptidase M66 domain. Position 446 (His-446) interacts with Zn(2+). Residue Glu-447 is part of the active site. Zn(2+) contacts are provided by His-450 and His-456.

It depends on Zn(2+) as a cofactor.

It is found in the secreted. Its activity is regulated as follows. Inhibited by divalent cation chelators such as BPS and EDTA. Virulence factor that contributes to intimate adherence of enterohemorrhagic E.coli (EHEC) O157:H7 to host cells. Is able to cleave the secreted human mucin 7 (MUC7) and the glycoprotein 340 (DMBT1/GP340). Also cleaves human C1 inhibitor (SERPING1), a regulator of multiple inflammatory pathways, and binds and localizes it to bacterial and host cell surfaces, protecting them from complement-mediated lysis. Therefore, the current model proposes two roles for StcE during infection: it acts first as a mucinase, allowing passage of EHEC through the oral cavity by cleaving the salivary glycoproteins that are responsible for bacterial aggregation. Similarly, in the colon, StcE cleaves the glycoproteins that protect the intestinal epithelial surface, allowing EHEC to come into close contact with host cell membranes. Secondly, it acts as an anti-inflammatory agent by localizing SERPING1 to cell membranes. This Escherichia coli O157:H7 protein is Metalloprotease StcE (stcE).